The following is a 135-amino-acid chain: Ribosome-binding factor A (135 aa).

This sequence belongs to the RbfA family. In terms of assembly, monomer. Binds 30S ribosomal subunits, but not 50S ribosomal subunits or 70S ribosomes.

The protein resides in the cytoplasm. In terms of biological role, one of several proteins that assist in the late maturation steps of the functional core of the 30S ribosomal subunit. Associates with free 30S ribosomal subunits (but not with 30S subunits that are part of 70S ribosomes or polysomes). Required for efficient processing of 16S rRNA. May interact with the 5'-terminal helix region of 16S rRNA. The protein is Ribosome-binding factor A of Bartonella quintana (strain Toulouse) (Rochalimaea quintana).